The primary structure comprises 375 residues: tRNA-specific 2-thiouridylase MnmA (375 aa).

ATP is bound by residues glycine 12–serine 19 and methionine 38. The segment at asparagine 98–aspartate 100 is interaction with target base in tRNA. The active-site Nucleophile is the cysteine 103. Cysteines 103 and 200 form a disulfide. Position 127 (glycine 127) interacts with ATP. The interval lysine 150–glutamine 152 is interaction with tRNA. Cysteine 200 acts as the Cysteine persulfide intermediate in catalysis. Residues arginine 312–tyrosine 313 form an interaction with tRNA region.

The protein belongs to the MnmA/TRMU family.

The protein resides in the cytoplasm. The enzyme catalyses S-sulfanyl-L-cysteinyl-[protein] + uridine(34) in tRNA + AH2 + ATP = 2-thiouridine(34) in tRNA + L-cysteinyl-[protein] + A + AMP + diphosphate + H(+). Catalyzes the 2-thiolation of uridine at the wobble position (U34) of tRNA, leading to the formation of s(2)U34. The sequence is that of tRNA-specific 2-thiouridylase MnmA from Levilactobacillus brevis (strain ATCC 367 / BCRC 12310 / CIP 105137 / JCM 1170 / LMG 11437 / NCIMB 947 / NCTC 947) (Lactobacillus brevis).